We begin with the raw amino-acid sequence, 130 residues long: Small ribosomal subunit protein uS8 (130 aa).

Belongs to the universal ribosomal protein uS8 family. In terms of assembly, part of the 30S ribosomal subunit.

Functionally, one of the primary rRNA binding proteins, it binds directly to 16S rRNA central domain where it helps coordinate assembly of the platform of the 30S subunit. The polypeptide is Small ribosomal subunit protein uS8 (Methanocella arvoryzae (strain DSM 22066 / NBRC 105507 / MRE50)).